The following is a 129-amino-acid chain: MSHLQNLLLDTLLGTKHVDGAALIKLQEKTLCVTSPGFSVMPCDVRTLLNGFAKNPLLTRREGLYFREKDYKCVRADDCSLYAKKENTGVVVVKTHMYLLVATYTAGMYPSVCVEATEKLGEYLRKKGN.

Belongs to the profilin family. As to expression, expressed in testis, in seminiferous tubules (at protein level). Expressed in spermatocytes and spermatids, but not in spermatogonium.

It localises to the cytoplasm. Its function is as follows. Involved in male fertility. Required for manchette development and acrosome biogenesis during spermiogenesis. Binds in vitro to phospholipids, including phosphatidylinositol 3-phosphate (PtdIns(3)P), phosphatidylinositol 4,5-bisphosphate (PtdIns(4,5)P2), phosphatidylinositol 4-phosphate (PtdIns(4)P) and phosphatidic acid (PA). Contrary to other profilin family members, does not bind to actin in vitro. The chain is Profilin-4 (Pfn4) from Rattus norvegicus (Rat).